The sequence spans 396 residues: Tryptophan synthase beta chain (396 aa).

K88 carries the post-translational modification N6-(pyridoxal phosphate)lysine.

It belongs to the TrpB family. Tetramer of two alpha and two beta chains. Requires pyridoxal 5'-phosphate as cofactor.

It catalyses the reaction (1S,2R)-1-C-(indol-3-yl)glycerol 3-phosphate + L-serine = D-glyceraldehyde 3-phosphate + L-tryptophan + H2O. Its pathway is amino-acid biosynthesis; L-tryptophan biosynthesis; L-tryptophan from chorismate: step 5/5. In terms of biological role, the beta subunit is responsible for the synthesis of L-tryptophan from indole and L-serine. This chain is Tryptophan synthase beta chain, found in Shewanella baltica (strain OS185).